Reading from the N-terminus, the 341-residue chain is Phenylalanine--tRNA ligase alpha subunit (341 aa).

Glu-256 contributes to the Mg(2+) binding site.

Belongs to the class-II aminoacyl-tRNA synthetase family. Phe-tRNA synthetase alpha subunit type 1 subfamily. Tetramer of two alpha and two beta subunits. Requires Mg(2+) as cofactor.

The protein resides in the cytoplasm. It catalyses the reaction tRNA(Phe) + L-phenylalanine + ATP = L-phenylalanyl-tRNA(Phe) + AMP + diphosphate + H(+). This is Phenylalanine--tRNA ligase alpha subunit from Leptospira biflexa serovar Patoc (strain Patoc 1 / Ames).